Reading from the N-terminus, the 1871-residue chain is Protein RRP5 homolog (1871 aa).

The segment at 1 to 62 is disordered; that stretch reads MANLEESFPR…KTKKLKIEKR (62 aa). At alanine 2 the chain carries N-acetylalanine. The residue at position 7 (serine 7) is a Phosphoserine. Over residues 43-59 the composition is skewed to basic residues; the sequence is KRKKSQKGPAKTKKLKI. S1 motif domains are found at residues 83-171, 187-258, 281-346, and 365-436; these read GMRI…LSLN, GMLL…LSVG, GLVV…LSLR, and GAVL…LSLR. Serine 438 bears the Phosphoserine mark. S1 motif domains follow at residues 453–522, 542–611, 636–707, and 729–798; these read GAVV…MTLK, GLQT…LSFK, GQLV…LCRK, and GMLL…LSLR. Residues 998–1018 form a disordered region; the sequence is AAKRTMRPTQKDSETVDEDEE. Residue lysine 1030 forms a Glycyl lysine isopeptide (Lys-Gly) (interchain with G-Cter in SUMO1) linkage. 4 consecutive S1 motif domains span residues 1036–1109, 1149–1222, 1230–1298, and 1324–1396; these read GDMV…ISHP, GQTV…LSLT, GEVA…LSLR, and GQLL…LSFL. Residues serine 1360 and serine 1362 each carry the phosphoserine modification. Disordered stretches follow at residues 1395–1531 and 1549–1586; these read FLPG…APRL and ALPP…KAEK. Residue lysine 1416 forms a Glycyl lysine isopeptide (Lys-Gly) (interchain with G-Cter in SUMO2) linkage. Composition is skewed to basic and acidic residues over residues 1416–1459 and 1469–1484; these read KQEE…EKQQ and GGRE…ERVS. Phosphoserine is present on residues serine 1476, serine 1493, and serine 1498. The segment covering 1575–1586 has biased composition (basic and acidic residues); that stretch reads KERELEKQKAEK. HAT repeat units lie at residues 1599 to 1631, 1705 to 1737, 1775 to 1807, and 1809 to 1844; these read GRQP…FHLQ, EKFQ…FLLR, GDAE…MTIK, and GSQK…YEKQ.

As to quaternary structure, interacts with NF-kappa-B p50/NFKB1 and NF-kappa-B p65/RELA.

It localises to the nucleus. Its subcellular location is the nucleolus. Its function is as follows. Essential for the generation of mature 18S rRNA, specifically necessary for cleavages at sites A0, 1 and 2 of the 47S precursor. Directly interacts with U3 snoRNA. In terms of biological role, involved in the biogenesis of rRNA. The chain is Protein RRP5 homolog (PDCD11) from Homo sapiens (Human).